The primary structure comprises 577 residues: Insulin-like growth factor 2 mRNA-binding protein 1 (577 aa).

2 consecutive RRM domains span residues 2–75 (NKLY…HSVP) and 81–156 (RKIQ…YIPD). Phosphoserine is present on residues Ser12 and Ser73. The interval 156-190 (DEQITQGPENGRRGGFGSRGQPRQGSPVAAGAPAK) is disordered. A Phosphoserine; by MTOR modification is found at Ser181. 4 KH domains span residues 195 to 260 (DIPL…CKMI), 276 to 343 (EVPL…EQEI), 405 to 470 (QEMV…QGRI), and 487 to 553 (KLET…QRKI). The interval 312 to 323 (ISSLQDLTLYNP) is sufficient for nuclear export. The sufficient for nuclear export stretch occupies residues 485–495 (EVKLETHIRVP). At Thr528 the chain carries Phosphothreonine.

It belongs to the RRM IMP/VICKZ family. In terms of assembly, can form homodimers and heterodimers with IGF2BP1 and IGF2BP3. Component of the coding region determinant (CRD)-mediated complex, composed of DHX9, HNRNPU, IGF2BP1, SYNCRIP and YBX1. Identified in a mRNP complex, at least composed of DHX9, DDX3X, ELAVL1, HNRNPU, IGF2BP1, ILF3, PABPC1, PCBP2, PTBP2, STAU1, STAU2, SYNCRIP and YBX1. Associates with mRNP complex. Interacts with FMR1. Component of a multisubunit autoregulatory RNP complex (ARC), at least composed of IGF2BP1, PABPC1 and CSDE1. Interacts with AGO1 and AGO2. Interacts, through domains KH3 and KH4, with PABPC1 in an RNA-independent manner. Component of a TAU mRNP complex, at least composed of IGF2BP1, ELAVL4 and G3BP. Interacts with ELAVL4 in an RNA-dependent manner. Associates with microtubules and polysomes. Interacts with ELAVL1 and MATR3. Post-translationally, phosphorylated at Ser-181 by mTORC2 cotranslationally, promoting binding to the 3'-UTR of IGF2 mRNA. Expressed in zygotes and blastocysts (at protein level). Expressed in brain, skeletal muscle, trophoblasts of placenta, oocytes and spermatogonia (at protein level). Expressed in testis and ovary. Following colon injury, expressed in the wound bed mesenchyme during the first phase of repair, probably by colonic mesenchymal stem cells (at protein level).

It localises to the nucleus. It is found in the cytoplasm. Its subcellular location is the perinuclear region. The protein localises to the P-body. The protein resides in the stress granule. It localises to the cell projection. It is found in the lamellipodium. Its subcellular location is the dendrite. The protein localises to the dendritic spine. The protein resides in the growth cone. It localises to the filopodium. It is found in the axon. In terms of biological role, RNA-binding factor that recruits target transcripts to cytoplasmic protein-RNA complexes (mRNPs). This transcript 'caging' into mRNPs allows mRNA transport and transient storage. It also modulates the rate and location at which target transcripts encounter the translational apparatus and shields them from endonuclease attacks or microRNA-mediated degradation. Preferentially binds to N6-methyladenosine (m6A)-containing mRNAs and increases their stability. Regulates localized beta-actin/ACTB mRNA translation, a crucial process for cell polarity, cell migration and neurite outgrowth. Co-transcriptionally associates with the ACTB mRNA in the nucleus. This binding involves a conserved 54-nucleotide element in the ACTB mRNA 3'-UTR, known as the 'zipcode'. The RNP thus formed is exported to the cytoplasm, binds to a motor protein and is transported along the cytoskeleton to the cell periphery. During transport, prevents ACTB mRNA from being translated into protein. When the RNP complex reaches its destination near the plasma membrane, IGF2BP1 is phosphorylated. This releases the mRNA, allowing ribosomal 40S and 60S subunits to assemble and initiate ACTB protein synthesis. Monomeric ACTB then assembles into the subcortical actin cytoskeleton. During neuronal development, key regulator of neurite outgrowth, growth cone guidance and neuronal cell migration, presumably through the spatiotemporal fine tuning of protein synthesis, such as that of ACTB. May regulate mRNA transport to activated synapses. Binds to the 3'-UTR of CD44 mRNA and stabilizes it, hence promotes cell adhesion and invadopodia formation in cancer cells. Binds to the oncofetal H19 transcript and regulates its localization. Binds to and stabilizes BTRC/FBW1A mRNA. Binds to the adenine-rich autoregulatory sequence (ARS) located in PABPC1 mRNA and represses its translation. PABPC1 mRNA-binding is stimulated by PABPC1 protein. Prevents BTRC/FBW1A mRNA degradation by disrupting microRNA-dependent interaction with AGO2. During cellular stress, such as oxidative stress or heat shock, stabilizes target mRNAs that are recruited to stress granules, including CD44, IGF2, MAPK4, MYC, PTEN, RAPGEF2 and RPS6KA5 transcripts. Interacts with GAP43 transcript and transports it to axons. Binds to the 3'-UTR of IGF2 mRNA by a mechanism of cooperative and sequential dimerization and regulates IGF2 mRNA subcellular localization and translation. Binds to MYC mRNA, in the coding region instability determinant (CRD) of the open reading frame (ORF), hence prevents MYC cleavage by endonucleases and possibly microRNA targeting to MYC-CRD. Binding to MYC mRNA is enhanced by m6A-modification of the CRD. Binds to and stabilizes ABCB1/MDR-1 mRNA. Binds to the neuron-specific TAU mRNA and regulates its localization. Plays a direct role in the transport and translation of transcripts required for axonal regeneration in adult sensory neurons. During interstinal wound repair, interacts with and stabilizes PTGS2 transcript. PTGS2 mRNA stabilization may be crucial for colonic mucosal wound healing. In Mus musculus (Mouse), this protein is Insulin-like growth factor 2 mRNA-binding protein 1 (Igf2bp1).